Here is a 284-residue protein sequence, read N- to C-terminus: uncharacterized protein (284 aa).

Positions 1-23 (MKRGCAIAVMICGLITSVSAASA) are cleaved as a signal peptide.

It belongs to the surface antigen msp4 family.

This is an uncharacterized protein from Brucella abortus (strain 2308).